The chain runs to 57 residues: Large ribosomal subunit protein bL33 (57 aa).

The protein belongs to the bacterial ribosomal protein bL33 family.

The chain is Large ribosomal subunit protein bL33 from Bifidobacterium longum (strain NCC 2705).